The chain runs to 427 residues: Serine--tRNA ligase (427 aa).

231-233 (TAE) provides a ligand contact to L-serine. Residues 262–264 (RRE) and V278 contribute to the ATP site. E285 contributes to the L-serine binding site. 349 to 352 (EVSS) contributes to the ATP binding site. Residue S384 coordinates L-serine.

This sequence belongs to the class-II aminoacyl-tRNA synthetase family. Type-1 seryl-tRNA synthetase subfamily. In terms of assembly, homodimer. The tRNA molecule binds across the dimer.

The protein resides in the cytoplasm. The enzyme catalyses tRNA(Ser) + L-serine + ATP = L-seryl-tRNA(Ser) + AMP + diphosphate + H(+). It catalyses the reaction tRNA(Sec) + L-serine + ATP = L-seryl-tRNA(Sec) + AMP + diphosphate + H(+). The protein operates within aminoacyl-tRNA biosynthesis; selenocysteinyl-tRNA(Sec) biosynthesis; L-seryl-tRNA(Sec) from L-serine and tRNA(Sec): step 1/1. Catalyzes the attachment of serine to tRNA(Ser). Is also able to aminoacylate tRNA(Sec) with serine, to form the misacylated tRNA L-seryl-tRNA(Sec), which will be further converted into selenocysteinyl-tRNA(Sec). The chain is Serine--tRNA ligase from Chlamydia pneumoniae (Chlamydophila pneumoniae).